The following is a 63-amino-acid chain: Large ribosomal subunit protein uL29 (63 aa).

Belongs to the universal ribosomal protein uL29 family.

In Pectobacterium carotovorum subsp. carotovorum (strain PC1), this protein is Large ribosomal subunit protein uL29.